The sequence spans 522 residues: Tyrosine-protein phosphatase 1 (522 aa).

A disordered region spans residues 32–63 (RSNSSISLSSSSHSSFSRMGSLGSLPTNSGSS). Residues 33-63 (SNSSISLSSSSHSSFSRMGSLGSLPTNSGSS) show a composition bias toward low complexity. The region spanning 97–471 (IKEEFRLLEE…LFCYKTILDE (375 aa)) is the Tyrosine-protein phosphatase domain. The active-site Phosphocysteine intermediate is Cys310. Positions 327–426 (MKKLDHYFKQ…DDAAESDLKY (100 aa)) are PTPase insert (Asn-rich). Over residues 382-410 (NNNNNNNLNNNNNINNNSNGSNNTPQTEP) the composition is skewed to low complexity. The disordered stretch occupies residues 382–420 (NNNNNNNLNNNNNINNNSNGSNNTPQTEPNNEEDDDDAA). The segment covering 411 to 420 (NNEEDDDDAA) has biased composition (acidic residues).

This sequence belongs to the protein-tyrosine phosphatase family. Non-receptor class subfamily. As to expression, expressed predominantly in anterior-like cells and to a lesser degree in prestalk cells.

The protein resides in the cytoplasm. Its subcellular location is the cell membrane. The enzyme catalyses O-phospho-L-tyrosyl-[protein] + H2O = L-tyrosyl-[protein] + phosphate. Functionally, may have a role in growth and in the early stages of development. Affects the timing of development. The protein is Tyrosine-protein phosphatase 1 (ptpA1-1) of Dictyostelium discoideum (Social amoeba).